A 347-amino-acid chain; its full sequence is UPF0284 protein M164_0030 (347 aa).

The protein belongs to the UPF0284 family.

In Saccharolobus islandicus (strain M.16.4 / Kamchatka #3) (Sulfolobus islandicus), this protein is UPF0284 protein M164_0030.